The following is a 424-amino-acid chain: Elongation factor Tu, mitochondrial (424 aa).

Residues 36–234 enclose the tr-type G domain; it reads KPHVNVGTIG…VLDTKIPLPH (199 aa). The G1 stretch occupies residues 45–52; the sequence is GHVDHGKT. Residue 45–52 coordinates GTP; it reads GHVDHGKT. The G2 stretch occupies residues 86–90; that stretch reads GITIT. Positions 107–110 are G3; that stretch reads DCPG. Residues 107–111 and 162–165 each bind GTP; these read DCPGH and NKMD. Positions 162-165 are G4; that stretch reads NKMD. The tract at residues 199 to 201 is G5; that stretch reads AAA.

Belongs to the TRAFAC class translation factor GTPase superfamily. Classic translation factor GTPase family. EF-Tu/EF-1A subfamily.

It localises to the mitochondrion. Its function is as follows. This protein promotes the GTP-dependent binding of aminoacyl-tRNA to the A-site of ribosomes during protein biosynthesis. In Dictyostelium discoideum (Social amoeba), this protein is Elongation factor Tu, mitochondrial (tufm).